The sequence spans 300 residues: ClpXP adapter protein SpxH (300 aa).

It belongs to the SpxH family. Interacts with Spx.

It localises to the cytoplasm. In terms of biological role, adapter protein required for efficient degradation of Spx by ClpXP under non-stress conditions. Interaction with Spx stabilizes Spx and exposes the C-terminus of Spx for recognition and proteolysis by ClpXP. This is ClpXP adapter protein SpxH from Bacillus licheniformis (strain ATCC 14580 / DSM 13 / JCM 2505 / CCUG 7422 / NBRC 12200 / NCIMB 9375 / NCTC 10341 / NRRL NRS-1264 / Gibson 46).